A 1873-amino-acid polypeptide reads, in one-letter code: Kinesin-related protein 8 (1873 aa).

The 401-residue stretch at 13–413 (CVRVALRVRP…LKYAYRARNI (401 aa)) folds into the Kinesin motor domain. 93-100 (GQTGSGKT) serves as a coordination point for ATP. Disordered regions lie at residues 231–302 (NSPV…DERN), 463–567 (VSIP…SPTS), 778–797 (LDKD…YYED), 841–891 (KIDS…ARKT), 930–1008 (KQRV…TEQL), 1179–1207 (PQPL…QRSS), 1244–1267 (LPSQ…STSS), 1328–1360 (TTTT…NNSS), and 1403–1467 (NNIT…PRPD). The segment covering 232–247 (SPVTSSSTSSTSTSSS) has biased composition (low complexity). A compositionally biased stretch (acidic residues) spans 280–297 (IDEDEEDDEEDEDDDIMS). The span at 473–567 (TPTLTNNNNN…NNTATPSPTS (95 aa)) shows a compositional bias: low complexity. Residues 715-933 (FENDSEELSD…KEIEVHKQRV (219 aa)) adopt a coiled-coil conformation. Composition is skewed to low complexity over residues 937–1005 (INSK…TPTT), 1182–1200 (LQSQ…NSEQ), 1244–1254 (LPSQQQLSSSQ), 1348–1358 (NNTNNNNNNNN), and 1423–1454 (SLQS…SNNN). 5 WD repeats span residues 1506-1546 (GHDG…NMLD), 1548-1587 (SSPG…NTNL), 1589-1628 (IFKT…KPLK), 1636-1673 (HHTG…LAQK), and 1677-1714 (PHHD…NLIN). A disordered region spans residues 1758-1780 (NNNNNNSSNNNKSSSAPSSTTSS). WD repeat units follow at residues 1805 to 1842 (AHND…NSLL) and 1844 to 1873 (GHES…IWKC).

The protein belongs to the TRAFAC class myosin-kinesin ATPase superfamily. Kinesin family.

Its subcellular location is the cytoplasm. The protein resides in the cytoskeleton. Functionally, microtubule-associated force-producing protein that plays a role in organelle transport. Its motor activity is directed toward the microtubule's plus end. Cooperates with kif10 and dynein to organize interphase microtubules. This chain is Kinesin-related protein 8 (kif8), found in Dictyostelium discoideum (Social amoeba).